Here is a 463-residue protein sequence, read N- to C-terminus: ATP synthase subunit beta (463 aa).

152–159 provides a ligand contact to ATP; sequence GGAGVGKT.

Belongs to the ATPase alpha/beta chains family. In terms of assembly, F-type ATPases have 2 components, CF(1) - the catalytic core - and CF(0) - the membrane proton channel. CF(1) has five subunits: alpha(3), beta(3), gamma(1), delta(1), epsilon(1). CF(0) has three main subunits: a(1), b(2) and c(9-12). The alpha and beta chains form an alternating ring which encloses part of the gamma chain. CF(1) is attached to CF(0) by a central stalk formed by the gamma and epsilon chains, while a peripheral stalk is formed by the delta and b chains.

The protein localises to the cell inner membrane. The catalysed reaction is ATP + H2O + 4 H(+)(in) = ADP + phosphate + 5 H(+)(out). Produces ATP from ADP in the presence of a proton gradient across the membrane. The catalytic sites are hosted primarily by the beta subunits. In Shewanella oneidensis (strain ATCC 700550 / JCM 31522 / CIP 106686 / LMG 19005 / NCIMB 14063 / MR-1), this protein is ATP synthase subunit beta.